The following is a 201-amino-acid chain: Reticulon-like protein B10 (201 aa).

Residues Val14 to Gln201 form the Reticulon domain. 3 helical membrane-spanning segments follow: residues Gly25–Tyr45, Ser46–Ala66, and Phe135–Leu155.

It is found in the endoplasmic reticulum membrane. The chain is Reticulon-like protein B10 (RTNLB10) from Arabidopsis thaliana (Mouse-ear cress).